We begin with the raw amino-acid sequence, 376 residues long: 2-oxoglutarate synthase subunit KorA (376 aa).

As to quaternary structure, heterotetramer of the KorA, KorB, KorC and KorD subunits.

The catalysed reaction is 2 oxidized [2Fe-2S]-[ferredoxin] + 2-oxoglutarate + CoA = succinyl-CoA + 2 reduced [2Fe-2S]-[ferredoxin] + CO2 + H(+). In Methanothermobacter thermautotrophicus (strain ATCC 29096 / DSM 1053 / JCM 10044 / NBRC 100330 / Delta H) (Methanobacterium thermoautotrophicum), this protein is 2-oxoglutarate synthase subunit KorA (korA).